The primary structure comprises 759 residues: Pseudocleavage protein nop-1 (759 aa).

5 disordered regions span residues 1–46 (MSAP…SSIF), 334–361 (KIFP…MDKK), 379–413 (LSVN…NLSQ), 440–495 (QSSR…KKER), and 732–759 (ESDG…GAKI). Residues 10 to 42 (DIHSDDRDHADHQTKKEKHWFEEKSEQNGENRR) are compositionally biased toward basic and acidic residues. Residues 448–465 (TGNSSISSGVGSIASGTS) are compositionally biased toward low complexity. The segment covering 473 to 482 (GSRSGQSISR) has biased composition (polar residues). The span at 485-495 (SRRDDEGKKER) shows a compositional bias: basic and acidic residues. Positions 736–759 (PASSNDDFDTQSTASTSTVFGAKI) are enriched in polar residues.

The protein resides in the nucleus. The protein localises to the cytoplasm. Its subcellular location is the cell cortex. It localises to the cleavage furrow. Required for formation of the pseudocleavage furrow during the first cleavage of the embryo and also mediates aster-induced furrowing during cytokinesis. Promotes cortical recruitment of ani-1 and nmy-2 during pseudocleavage and cytokinesis and promotes the accumulation of actin at furrowing regions. Regulates establishment of embryonic cell polarity. This Caenorhabditis elegans protein is Pseudocleavage protein nop-1 (nop-1).